A 377-amino-acid chain; its full sequence is Chaperone protein DnaJ (377 aa).

The J domain occupies 4-69 (DYYEALGVTR…QKRAAYDRFG (66 aa)). Residues 135 to 213 (GKTAQIRVPT…CHGQGRVTQE (79 aa)) form a CR-type zinc finger. Zn(2+) is bound by residues Cys-148, Cys-151, Cys-165, Cys-168, Cys-187, Cys-190, Cys-201, and Cys-204. 4 CXXCXGXG motif repeats span residues 148–155 (CDECSGSG), 165–172 (CTMCSGSG), 187–194 (CPGCNGRG), and 201–208 (CEKCHGQG).

It belongs to the DnaJ family. As to quaternary structure, homodimer. The cofactor is Zn(2+).

It is found in the cytoplasm. Its function is as follows. Participates actively in the response to hyperosmotic and heat shock by preventing the aggregation of stress-denatured proteins and by disaggregating proteins, also in an autonomous, DnaK-independent fashion. Unfolded proteins bind initially to DnaJ; upon interaction with the DnaJ-bound protein, DnaK hydrolyzes its bound ATP, resulting in the formation of a stable complex. GrpE releases ADP from DnaK; ATP binding to DnaK triggers the release of the substrate protein, thus completing the reaction cycle. Several rounds of ATP-dependent interactions between DnaJ, DnaK and GrpE are required for fully efficient folding. Also involved, together with DnaK and GrpE, in the DNA replication of plasmids through activation of initiation proteins. This is Chaperone protein DnaJ from Brucella canis (strain ATCC 23365 / NCTC 10854 / RM-666).